Here is a 111-residue protein sequence, read N- to C-terminus: Cytochrome c 2.1 (111 aa).

Ser2 is subject to N-acetylserine. Cys20, Cys23, His24, and Met85 together coordinate heme c.

This sequence belongs to the cytochrome c family. In terms of processing, binds 1 heme c group covalently per subunit.

It is found in the mitochondrion intermembrane space. Functionally, electron carrier protein. The oxidized form of the cytochrome c heme group can accept an electron from the heme group of the cytochrome c1 subunit of cytochrome reductase. Cytochrome c then transfers this electron to the cytochrome oxidase complex, the final protein carrier in the mitochondrial electron-transport chain. This is Cytochrome c 2.1 (cyc-2.1) from Caenorhabditis elegans.